A 447-amino-acid polypeptide reads, in one-letter code: Tubulin beta chain (447 aa).

Positions 11, 69, 138, 142, 143, 144, 204, and 226 each coordinate GTP. Glu-69 is a Mg(2+) binding site. The interval Gln-424–Glu-447 is disordered. A compositionally biased stretch (acidic residues) spans Glu-432 to Glu-447.

This sequence belongs to the tubulin family. Dimer of alpha and beta chains. A typical microtubule is a hollow water-filled tube with an outer diameter of 25 nm and an inner diameter of 15 nM. Alpha-beta heterodimers associate head-to-tail to form protofilaments running lengthwise along the microtubule wall with the beta-tubulin subunit facing the microtubule plus end conferring a structural polarity. Microtubules usually have 13 protofilaments but different protofilament numbers can be found in some organisms and specialized cells. Mg(2+) serves as cofactor.

The protein resides in the cytoplasm. Its subcellular location is the cytoskeleton. Tubulin is the major constituent of microtubules, a cylinder consisting of laterally associated linear protofilaments composed of alpha- and beta-tubulin heterodimers. Microtubules grow by the addition of GTP-tubulin dimers to the microtubule end, where a stabilizing cap forms. Below the cap, tubulin dimers are in GDP-bound state, owing to GTPase activity of alpha-tubulin. This chain is Tubulin beta chain, found in Venturia inaequalis (Apple scab fungus).